The following is a 233-amino-acid chain: 2-C-methyl-D-erythritol 4-phosphate cytidylyltransferase (233 aa).

It belongs to the IspD/TarI cytidylyltransferase family. IspD subfamily.

The enzyme catalyses 2-C-methyl-D-erythritol 4-phosphate + CTP + H(+) = 4-CDP-2-C-methyl-D-erythritol + diphosphate. Its pathway is isoprenoid biosynthesis; isopentenyl diphosphate biosynthesis via DXP pathway; isopentenyl diphosphate from 1-deoxy-D-xylulose 5-phosphate: step 2/6. Catalyzes the formation of 4-diphosphocytidyl-2-C-methyl-D-erythritol from CTP and 2-C-methyl-D-erythritol 4-phosphate (MEP). This is 2-C-methyl-D-erythritol 4-phosphate cytidylyltransferase from Thiobacillus denitrificans (strain ATCC 25259 / T1).